We begin with the raw amino-acid sequence, 856 residues long: Leucine--tRNA ligase (856 aa).

Positions 53-63 (PYPSGNLHMGH) match the 'HIGH' region motif. A 'KMSKS' region motif is present at residues 622–626 (KMSKS). Lysine 625 contributes to the ATP binding site.

It belongs to the class-I aminoacyl-tRNA synthetase family.

The protein resides in the cytoplasm. It carries out the reaction tRNA(Leu) + L-leucine + ATP = L-leucyl-tRNA(Leu) + AMP + diphosphate. The chain is Leucine--tRNA ligase from Prochlorococcus marinus (strain MIT 9301).